The following is a 750-amino-acid chain: Cation-transporting P-type ATPase B (750 aa).

Positions 17–80 (RRIQLDVAGM…VIEQAGYRAT (64 aa)) constitute an HMA domain. Cys-28 and Cys-31 together coordinate a metal cation. The next 6 membrane-spanning stretches (helical) occupy residues 104 to 124 (LIVAALLFVPLADLSTMFAIV), 129 to 149 (FPGWGYLLTALAAPIVTWAAW), 167 to 187 (ETLISAGILAATGWSLSTIFV), 200 to 220 (AILHSDSIYFEVAAGVTVFVL), 360 to 380 (IAAVFVPMVFVIAGLAGASWL), and 389 to 409 (AFSVVLGVLVIACPCTLGLAT). Asp-445 serves as the catalytic 4-aspartylphosphate intermediate. 6 helical membrane-spanning segments follow: residues 471–491 (VLALASAVEAASEHSVATAIV), 500–520 (VADFVAFAGCGVSGVVAEHHV), 547–567 (SRGETVVFVSVDGVACGAVAI), 663–683 (VAIGAADLILVRDSLGVVPVA), 693–713 (TIRINMIWAFGYNVAAIPIAS), and 715–735 (GLLNPLIAGAAMAFSSFFVVS).

It belongs to the cation transport ATPase (P-type) (TC 3.A.3) family. Type IB subfamily.

The protein resides in the cell membrane. It carries out the reaction ATP + H2O = ADP + phosphate + H(+). This Mycobacterium leprae (strain TN) protein is Cation-transporting P-type ATPase B (ctpB).